Reading from the N-terminus, the 179-residue chain is Large ribosomal subunit protein uL5 (179 aa).

It belongs to the universal ribosomal protein uL5 family. As to quaternary structure, part of the 50S ribosomal subunit; part of the 5S rRNA/L5/L18/L25 subcomplex. Contacts the 5S rRNA and the P site tRNA. Forms a bridge to the 30S subunit in the 70S ribosome.

Its function is as follows. This is one of the proteins that bind and probably mediate the attachment of the 5S RNA into the large ribosomal subunit, where it forms part of the central protuberance. In the 70S ribosome it contacts protein S13 of the 30S subunit (bridge B1b), connecting the 2 subunits; this bridge is implicated in subunit movement. Contacts the P site tRNA; the 5S rRNA and some of its associated proteins might help stabilize positioning of ribosome-bound tRNAs. The chain is Large ribosomal subunit protein uL5 from Bdellovibrio bacteriovorus (strain ATCC 15356 / DSM 50701 / NCIMB 9529 / HD100).